The primary structure comprises 407 residues: Phosphopentomutase (407 aa).

Residues aspartate 10, aspartate 307, histidine 312, aspartate 348, histidine 349, and histidine 360 each contribute to the Mn(2+) site.

The protein belongs to the phosphopentomutase family. It depends on Mn(2+) as a cofactor.

It localises to the cytoplasm. The enzyme catalyses 2-deoxy-alpha-D-ribose 1-phosphate = 2-deoxy-D-ribose 5-phosphate. It carries out the reaction alpha-D-ribose 1-phosphate = D-ribose 5-phosphate. It functions in the pathway carbohydrate degradation; 2-deoxy-D-ribose 1-phosphate degradation; D-glyceraldehyde 3-phosphate and acetaldehyde from 2-deoxy-alpha-D-ribose 1-phosphate: step 1/2. Its function is as follows. Isomerase that catalyzes the conversion of deoxy-ribose 1-phosphate (dRib-1-P) and ribose 1-phosphate (Rib-1-P) to deoxy-ribose 5-phosphate (dRib-5-P) and ribose 5-phosphate (Rib-5-P), respectively. The protein is Phosphopentomutase of Methylobacterium nodulans (strain LMG 21967 / CNCM I-2342 / ORS 2060).